The chain runs to 130 residues: Small ribosomal subunit protein uS9 (130 aa).

Belongs to the universal ribosomal protein uS9 family.

This is Small ribosomal subunit protein uS9 from Acidovorax ebreus (strain TPSY) (Diaphorobacter sp. (strain TPSY)).